A 670-amino-acid chain; its full sequence is UvrABC system protein B (670 aa).

The region spanning 26 to 183 (EGLEDGLAHQ…RRLAELQYAR (158 aa)) is the Helicase ATP-binding domain. Position 39–46 (39–46 (GVTGSGKT)) interacts with ATP. The short motif at 92-115 (YYDYYQPEAYVPSSDTFIEKDAAV) is the Beta-hairpin element. Positions 431 to 597 (QVDDLLSEIR…GLNKKVSDVL (167 aa)) constitute a Helicase C-terminal domain. The UVR domain occupies 630–665 (DQKIRELEAQMYTHAQNLEFELAAGLRDEIHQLREQ).

This sequence belongs to the UvrB family. Forms a heterotetramer with UvrA during the search for lesions. Interacts with UvrC in an incision complex.

The protein resides in the cytoplasm. In terms of biological role, the UvrABC repair system catalyzes the recognition and processing of DNA lesions. A damage recognition complex composed of 2 UvrA and 2 UvrB subunits scans DNA for abnormalities. Upon binding of the UvrA(2)B(2) complex to a putative damaged site, the DNA wraps around one UvrB monomer. DNA wrap is dependent on ATP binding by UvrB and probably causes local melting of the DNA helix, facilitating insertion of UvrB beta-hairpin between the DNA strands. Then UvrB probes one DNA strand for the presence of a lesion. If a lesion is found the UvrA subunits dissociate and the UvrB-DNA preincision complex is formed. This complex is subsequently bound by UvrC and the second UvrB is released. If no lesion is found, the DNA wraps around the other UvrB subunit that will check the other stand for damage. This chain is UvrABC system protein B, found in Serratia proteamaculans (strain 568).